A 370-amino-acid polypeptide reads, in one-letter code: Actin-related protein 2/3 complex subunit 1A (370 aa).

WD repeat units follow at residues 6–45 (FLLE…WTKA), 50–89 (EHNG…WKPT), 140–179 (PIRS…VDEK), 202–241 (GTGG…QVST), 244–284 (TEFL…TFVS), and 322–365 (LHQN…SSIQ).

It belongs to the WD repeat ARPC1 family. In terms of assembly, probable component of the Arp2/3 complex in which it may replace ARPC1B.

It localises to the cytoplasm. Its subcellular location is the cytoskeleton. It is found in the nucleus. Functionally, probably functions as a component of the Arp2/3 complex which is involved in regulation of actin polymerization and together with an activating nucleation-promoting factor (NPF) mediates the formation of branched actin networks. In addition to its role in the cytoplasmic cytoskeleton, the Arp2/3 complex also promotes actin polymerization in the nucleus, thereby regulating gene transcription and repair of damaged DNA. The polypeptide is Actin-related protein 2/3 complex subunit 1A (Arpc1a) (Rattus norvegicus (Rat)).